A 514-amino-acid polypeptide reads, in one-letter code: ATP synthase subunit alpha (514 aa).

170–177 (GDRQTGKT) contacts ATP.

Belongs to the ATPase alpha/beta chains family. In terms of assembly, F-type ATPases have 2 components, CF(1) - the catalytic core - and CF(0) - the membrane proton channel. CF(1) has five subunits: alpha(3), beta(3), gamma(1), delta(1), epsilon(1). CF(0) has three main subunits: a(1), b(2) and c(9-12). The alpha and beta chains form an alternating ring which encloses part of the gamma chain. CF(1) is attached to CF(0) by a central stalk formed by the gamma and epsilon chains, while a peripheral stalk is formed by the delta and b chains.

The protein localises to the cell inner membrane. The catalysed reaction is ATP + H2O + 4 H(+)(in) = ADP + phosphate + 5 H(+)(out). Functionally, produces ATP from ADP in the presence of a proton gradient across the membrane. The alpha chain is a regulatory subunit. The protein is ATP synthase subunit alpha of Acidithiobacillus ferrooxidans (strain ATCC 23270 / DSM 14882 / CIP 104768 / NCIMB 8455) (Ferrobacillus ferrooxidans (strain ATCC 23270)).